A 487-amino-acid polypeptide reads, in one-letter code: MSDHAINEHPSRILNTIEKIRFWKNGLAEELELLFRKQCEDTFTLQAINIEVDTQDENKIEEVRIYLSTPAFDKTILTSACITVRSYYPSQPPIVQLLDEKGGKHKYTSLLLQLWKNERSVFNIYRLVQALIKQDFEREHTSPPELPTKLVNTIEKLKVKEENEAPPVIPAKPFSSSSEQHFRKVPALPSKLPPKPLKITANSSLGQETNSNSSSFQSTLFSLNTAPFSATSQQLVHDSVSLRRPSSNIPAQKPIPPKPEQNEIIITKDTPSLKDKYSKPALLPQKPKVSKGQIVQQVSVFSTGKKIESQSLLNLIDTDIETPLKGSSELLYSEDFKPNVDPVKIQQILHKQNKIIEEKWISQIRISKNLEVKQRLLDQERHALETLAKNIENNRFILGKRRRKAREALQKLDNLKDLSVQELFIIPSERELKYYELKRKDEKLDEGIRALNQALHHESIMPASWLKGIKLLARQQFLIRDEMLQYS.

One can recognise an SB domain in the interval 428 to 487 (SERELKYYELKRKDEKLDEGIRALNQALHHESIMPASWLKGIKLLARQQFLIRDEMLQYS).

Component of the ESCRT-I complex (endosomal sorting complex required for transport I).

It is found in the cytoplasm. The protein localises to the endosome. Its subcellular location is the late endosome membrane. Functionally, component of the ESCRT-I complex, a regulator of vesicular trafficking process. Binds to ubiquitinated cargo proteins and is required for the sorting of endocytic ubiquitinated cargos into multivesicular bodies (MVBs). Mediates the association to the ESCRT-0 complex. The chain is ESCRT-I complex subunit vps23 (sst6) from Schizosaccharomyces pombe (strain 972 / ATCC 24843) (Fission yeast).